The chain runs to 255 residues: Phosphoribosylformylglycinamidine synthase subunit PurQ (255 aa).

A Glutamine amidotransferase type-1 domain is found at 6–255; the sequence is TLILRTPGTN…TNAVKWARQV (250 aa). Residue C96 is the Nucleophile of the active site. Active-site residues include H217 and E219.

Part of the FGAM synthase complex composed of 1 PurL, 1 PurQ and 2 PurS subunits.

The protein resides in the cytoplasm. It catalyses the reaction N(2)-formyl-N(1)-(5-phospho-beta-D-ribosyl)glycinamide + L-glutamine + ATP + H2O = 2-formamido-N(1)-(5-O-phospho-beta-D-ribosyl)acetamidine + L-glutamate + ADP + phosphate + H(+). The enzyme catalyses L-glutamine + H2O = L-glutamate + NH4(+). It participates in purine metabolism; IMP biosynthesis via de novo pathway; 5-amino-1-(5-phospho-D-ribosyl)imidazole from N(2)-formyl-N(1)-(5-phospho-D-ribosyl)glycinamide: step 1/2. Its function is as follows. Part of the phosphoribosylformylglycinamidine synthase complex involved in the purines biosynthetic pathway. Catalyzes the ATP-dependent conversion of formylglycinamide ribonucleotide (FGAR) and glutamine to yield formylglycinamidine ribonucleotide (FGAM) and glutamate. The FGAM synthase complex is composed of three subunits. PurQ produces an ammonia molecule by converting glutamine to glutamate. PurL transfers the ammonia molecule to FGAR to form FGAM in an ATP-dependent manner. PurS interacts with PurQ and PurL and is thought to assist in the transfer of the ammonia molecule from PurQ to PurL. The protein is Phosphoribosylformylglycinamidine synthase subunit PurQ of Dehalococcoides mccartyi (strain ATCC BAA-2266 / KCTC 15142 / 195) (Dehalococcoides ethenogenes (strain 195)).